A 615-amino-acid polypeptide reads, in one-letter code: MLNRYPLWKYIMLVVVIIVGLLYALPNLYGEDPAVQITGVRGVAASEQTLIQVQKTLQEEKIPAKSVALEEGAILARFDTTDTQLRAREALMSVLGDKYVVALNLAPATPRWLAAIHADPMKLGLDLRGGVHFLMEVDMDTALGKLQEQNIDSLRSDLREKGIPYTTVRKENNYGLSITFRDSKARDEAIAYLTPRHRDLVISSQSGNQLRAVMTDARLSEAREYAVQQNINILRNRVNQLGVAEPVVQRQGADRIVVELPGIQDTARAKEILGATATLEFRLVNTNVDQAAAAAGRVPGDSEVKQTREGQPVVLYKRVILTGDHITDSTSSQDEYNQPQVNISLDSAGGNIMSNFTKDNIGKPMATLFVEYKDSGKKDANGRAVLVKQEEVINIANIQSRLGNSFRITGISNPNEARQLSLLLRAGALIAPIQIVEERTIGPTLGMQNIKQGLEACLAGLVVSILFMIFFYKKFGLIATSALVANLVLIVGIMSLLPGATLSMPGIAGIVLTLAVAVDANVLINERIKEELSNGRTVQQAINEGYAGAFSSIFDANITTLIKVIILYAVGTGAIKGFAITTGIGVATSMFTAIIGTRAIVNLLYGGKRVTKLSI.

The next 6 helical transmembrane spans lie at 10–30 (YIML…NLYG), 452–472 (QGLE…IFFY), 477–497 (LIAT…MSLL), 504–524 (MPGI…NVLI), 546–568 (YAGA…IILY), and 585–605 (GVAT…NLLY).

Belongs to the SecD/SecF family. SecD subfamily. As to quaternary structure, forms a complex with SecF. Part of the essential Sec protein translocation apparatus which comprises SecA, SecYEG and auxiliary proteins SecDF-YajC and YidC.

Its subcellular location is the cell inner membrane. Its function is as follows. Part of the Sec protein translocase complex. Interacts with the SecYEG preprotein conducting channel. SecDF uses the proton motive force (PMF) to complete protein translocation after the ATP-dependent function of SecA. The chain is Protein translocase subunit SecD from Salmonella choleraesuis (strain SC-B67).